The primary structure comprises 369 residues: Zeaxanthin 7,8(7',8')-cleavage dioxygenase, chromoplastic (369 aa).

Positions 62, 112, 177, and 356 each coordinate Fe cation.

The protein belongs to the carotenoid oxygenase family. The cofactor is Fe(2+). In the style branches.

Its subcellular location is the plastid. The protein resides in the chromoplast. It carries out the reaction all-trans-zeaxanthin + 2 O2 = crocetin dialdehyde + 2 3beta-hydroxy-beta-cyclocitral. In terms of biological role, cleaves zeaxanthin symmetrically at the 7-8 and 7'-8' double bonds to produce crocetin dialdehyde and hydroxy-beta-cyclocitral, two water-soluble precursors sequestred in vacuoles and involved in the synthesis of saffron pigment and aroma. The sequence is that of Zeaxanthin 7,8(7',8')-cleavage dioxygenase, chromoplastic (ZCD) from Crocus sativus (Saffron).